Consider the following 539-residue polypeptide: uncharacterized protein (539 aa).

The tract at residues 34-63 (AASEVSPIPQERPTTSLRKPTPRVQRPATD) is disordered. Helical transmembrane passes span 103 to 123 (FATP…TTVF), 141 to 161 (MTAT…LDTV), 184 to 204 (ILLL…GILL), 244 to 264 (GIFH…IFLN), 277 to 299 (FLGA…IIYI), 325 to 345 (LAVP…LVTF), 360 to 380 (VLST…AAAA), 399 to 419 (THVS…ILFL), 434 to 454 (VVAL…ADNT), 470 to 490 (IGGV…AIIL), and 496 to 516 (WGLY…AGVE).

It belongs to the multi antimicrobial extrusion (MATE) (TC 2.A.66.1) family.

The protein resides in the vacuole membrane. This is an uncharacterized protein from Schizosaccharomyces pombe (strain 972 / ATCC 24843) (Fission yeast).